Reading from the N-terminus, the 305-residue chain is Sulfate adenylyltransferase subunit 2 (305 aa).

Belongs to the PAPS reductase family. CysD subfamily. Heterodimer composed of CysD, the smaller subunit, and CysN.

The catalysed reaction is sulfate + ATP + H(+) = adenosine 5'-phosphosulfate + diphosphate. It functions in the pathway sulfur metabolism; hydrogen sulfide biosynthesis; sulfite from sulfate: step 1/3. In terms of biological role, with CysN forms the ATP sulfurylase (ATPS) that catalyzes the adenylation of sulfate producing adenosine 5'-phosphosulfate (APS) and diphosphate, the first enzymatic step in sulfur assimilation pathway. APS synthesis involves the formation of a high-energy phosphoric-sulfuric acid anhydride bond driven by GTP hydrolysis by CysN coupled to ATP hydrolysis by CysD. The protein is Sulfate adenylyltransferase subunit 2 of Pseudomonas putida (strain ATCC 700007 / DSM 6899 / JCM 31910 / BCRC 17059 / LMG 24140 / F1).